Reading from the N-terminus, the 753-residue chain is Replication restart protein PriA (753 aa).

The Helicase ATP-binding domain maps to 228 to 395 (SLITTKFQTC…LSKKYTLSVL (168 aa)). ATP is bound at residue 241 to 248 (GVTGSGKT). Positions 337–340 (DEEH) match the DEAH box motif. The Zn(2+) site is built by Cys458, Cys461, Cys467, Cys470, Cys485, Cys488, Cys499, and Cys502. The 156-residue stretch at 491 to 646 (RLSKPITSCP…DFPAFYKEEI (156 aa)) folds into the Helicase C-terminal domain.

This sequence belongs to the helicase family. PriA subfamily. In terms of assembly, component of the replication restart primosome. The cofactor is Zn(2+).

It carries out the reaction Couples ATP hydrolysis with the unwinding of duplex DNA by translocating in the 3'-5' direction.. It catalyses the reaction ATP + H2O = ADP + phosphate + H(+). Functionally, initiates the restart of stalled replication forks, which reloads the replicative helicase on sites other than the origin of replication. Recognizes and binds to abandoned replication forks and remodels them to uncover a helicase loading site. Promotes assembly of the primosome at these replication forks. The protein is Replication restart protein PriA of Chlamydia muridarum (strain MoPn / Nigg).